Here is a 480-residue protein sequence, read N- to C-terminus: Ribulose bisphosphate carboxylase large chain (480 aa).

A propeptide spanning residues 1–2 (MS) is cleaved from the precursor. Residue Pro3 is modified to N-acetylproline. Lys14 carries the N6,N6,N6-trimethyllysine modification. 2 residues coordinate substrate: Asn123 and Thr173. Catalysis depends on Lys175, which acts as the Proton acceptor. Residue Lys177 coordinates substrate. Mg(2+) contacts are provided by Lys201, Asp203, and Glu204. An N6-carboxylysine modification is found at Lys201. Catalysis depends on His294, which acts as the Proton acceptor. Residues Arg295, His327, and Ser379 each contribute to the substrate site.

The protein belongs to the RuBisCO large chain family. Type I subfamily. Heterohexadecamer of 8 large chains and 8 small chains; disulfide-linked. The disulfide link is formed within the large subunit homodimers. The cofactor is Mg(2+). In terms of processing, the disulfide bond which can form in the large chain dimeric partners within the hexadecamer appears to be associated with oxidative stress and protein turnover.

The protein resides in the plastid. It localises to the chloroplast. It catalyses the reaction 2 (2R)-3-phosphoglycerate + 2 H(+) = D-ribulose 1,5-bisphosphate + CO2 + H2O. The enzyme catalyses D-ribulose 1,5-bisphosphate + O2 = 2-phosphoglycolate + (2R)-3-phosphoglycerate + 2 H(+). In terms of biological role, ruBisCO catalyzes two reactions: the carboxylation of D-ribulose 1,5-bisphosphate, the primary event in carbon dioxide fixation, as well as the oxidative fragmentation of the pentose substrate in the photorespiration process. Both reactions occur simultaneously and in competition at the same active site. In Acorus calamus var. americanus (American sweet flag), this protein is Ribulose bisphosphate carboxylase large chain.